The following is a 2161-amino-acid chain: SH3 and multiple ankyrin repeat domains protein 1 (2161 aa).

The tract at residues 1-53 is disordered; that stretch reads MTHSPATSEDEERHSASECPEGGSESDSSPDGPGRGPRGTRGQGSGAPGSLAS. Positions 17–32 are enriched in low complexity; sequence SECPEGGSESDSSPDG. Positions 33–47 are enriched in gly residues; the sequence is PGRGPRGTRGQGSGA. Position 186 is a phosphotyrosine (Tyr-186). ANK repeat units follow at residues 212-245, 246-278, 279-312, 313-345, 346-378, and 379-395; these read SGET…FRAR, DGMT…YKDR, RGLT…IADE, NGWQ…AQNA, SGNT…VKNN, and NGQT…NFEL. 2 disordered regions span residues 412–433 and 455–546; these read ESPK…VPPA and GAAS…SRGR. Over residues 455-479 the composition is skewed to low complexity; sequence GAASSGAPGPTSGSQGQSQPSAPTT. A compositionally biased stretch (gly residues) spans 527–542; sequence PAGGTGGSGGPGGSLG. Ser-540 is modified (phosphoserine). Residue Arg-544 is modified to Omega-N-methylarginine. In terms of domain architecture, SH3 spans 554–613; that stretch reads VPGRSFMAVKSYQAQAEGEISLSKGEKIKVLSIGEGGFWEGQVKGRVGWFPSDCLEEVAN. The PDZ domain occupies 663–757; the sequence is TVLLQKKDSE…TLMVKVVMVT (95 aa). Residues Ser-671 and Ser-791 each carry the phosphoserine modification. The disordered stretch occupies residues 832 to 886; that stretch reads TISASESPGPGGLASLGKHRPKGFFATESSFDPHHRAQPSYERPSFLPPGPGLML. A Phosphoserine modification is found at Ser-890. 7 disordered regions span residues 909–1229, 1241–1289, 1353–1720, 1734–1785, 1827–1860, 1892–1983, and 1996–2023; these read SRSL…LDFT, RREG…KSID, LGLA…GVAS, GQAF…PTSP, LPTA…QPQA, PWAR…TRHL, and RRAP…LPIL. Pro residues predominate over residues 920 to 939; it reads IPPPPTTSPPEPPYSTPPVP. Arg-950 is subject to Omega-N-methylarginine. Residues 996-1020 show a composition bias toward basic residues; it reads AHHHPPHHHHHHAPPPQPHHHHAHP. Omega-N-methylarginine occurs at positions 1051, 1090, and 1101. A compositionally biased stretch (pro residues) spans 1127-1144; sequence PPAPSPTSPASPQPPPAV. Positions 1164–1181 are enriched in low complexity; the sequence is STSSSGRSSQGSSTEAEP. Pro residues predominate over residues 1199 to 1220; the sequence is SPAPAMSPVPPSPSPVPTPASP. The span at 1241–1252 shows a compositional bias: basic and acidic residues; sequence RREGGWQNEARR. An Asymmetric dimethylarginine modification is found at Arg-1253. Residue Ser-1287 is modified to Phosphoserine. Residues 1359 to 1368 are compositionally biased toward basic and acidic residues; the sequence is ARERALKESS. The segment covering 1374 to 1391 has biased composition (pro residues); sequence PQPPPRPPSPRYEAPPPT. Position 1423 is an omega-N-methylarginine (Arg-1423). Ser-1436 is modified (phosphoserine). 2 stretches are compositionally biased toward pro residues: residues 1517–1532 and 1583–1609; these read GVPP…PSPT and PLTP…PPPA. Residues 1618–1636 show a composition bias toward polar residues; it reads DSTASSLTSYDSEVATLTQ. Residues 1644–1670 show a composition bias toward pro residues; the sequence is DPHPPGPPAPAAPAPAAPQPGPDPPPG. Over residues 1678–1688 the composition is skewed to basic and acidic residues; that stretch reads VDSRSSSDHPL. Positions 1692–1702 are enriched in low complexity; it reads SSASTLSSLSA. Gly residues-rich tracts occupy residues 1703 to 1718 and 1764 to 1774; these read EGGG…GAGV and ASGGLRPGPSG. The segment covering 1775-1785 has biased composition (low complexity); that stretch reads GLRDPVTPTSP. The segment covering 1844-1855 has biased composition (pro residues); sequence PGPPPPPLPGPL. Arg-1895 bears the Omega-N-methylarginine mark. 3 stretches are compositionally biased toward low complexity: residues 1917 to 1940, 1954 to 1980, and 1996 to 2006; these read SSLQ…VSSL, TGTG…STST, and RRAPSPSLLPA. 3 positions are modified to omega-N-methylarginine: Arg-2016, Arg-2036, and Arg-2074. Residues 2098–2161 enclose the SAM domain; it reads WTKFDVADWL…DRALKFFLER (64 aa).

This sequence belongs to the SHANK family. May homomultimerize via its SAM domain. Interacts with the C-terminus of SSTR2 via the PDZ domain. Interacts with IGSF9, SHARPIN, SPTAN1, HOMER1 and DLGAP1/GKAP isoforms 1 and 2. Part of a complex with DLG4/PSD-95 and DLGAP1/GKAP. Interacts with BAIAP2. Interacts with HOMER1 and HOMER3. In terms of tissue distribution, expressed in brain particularly in the amygdala, hippocampus, substantia nigra and thalamus. Isoform 2 seems to be expressed ubiquitously.

It is found in the cytoplasm. It localises to the postsynaptic density. The protein resides in the synapse. Seems to be an adapter protein in the postsynaptic density (PSD) of excitatory synapses that interconnects receptors of the postsynaptic membrane including NMDA-type and metabotropic glutamate receptors via complexes with GKAP/PSD-95 and Homer, respectively, and the actin-based cytoskeleton. Plays a role in the structural and functional organization of the dendritic spine and synaptic junction. The protein is SH3 and multiple ankyrin repeat domains protein 1 (SHANK1) of Homo sapiens (Human).